The sequence spans 213 residues: Orotate phosphoribosyltransferase (213 aa).

Lysine 26 serves as a coordination point for 5-phospho-alpha-D-ribose 1-diphosphate. 34–35 (FF) is an orotate binding site. Residues 72 to 73 (YK), arginine 99, lysine 100, lysine 103, histidine 105, and 124 to 132 (DDVITAGTA) contribute to the 5-phospho-alpha-D-ribose 1-diphosphate site. Orotate contacts are provided by threonine 128 and arginine 156.

Belongs to the purine/pyrimidine phosphoribosyltransferase family. PyrE subfamily. In terms of assembly, homodimer. Mg(2+) is required as a cofactor.

It catalyses the reaction orotidine 5'-phosphate + diphosphate = orotate + 5-phospho-alpha-D-ribose 1-diphosphate. Its pathway is pyrimidine metabolism; UMP biosynthesis via de novo pathway; UMP from orotate: step 1/2. Catalyzes the transfer of a ribosyl phosphate group from 5-phosphoribose 1-diphosphate to orotate, leading to the formation of orotidine monophosphate (OMP). The protein is Orotate phosphoribosyltransferase of Pseudomonas savastanoi pv. phaseolicola (strain 1448A / Race 6) (Pseudomonas syringae pv. phaseolicola (strain 1448A / Race 6)).